The primary structure comprises 318 residues: Cytochrome f (318 aa).

The N-terminal stretch at 1-34 (MKNNYLANLIKTLQAIVVSVALLAPLVLPSAVNA) is a signal peptide. Heme is bound by residues Phe-35, Cys-55, Cys-58, and His-59. Residues 284-304 (VKGLIAFFFTVILAQILLVLK) traverse the membrane as a helical segment.

This sequence belongs to the cytochrome f family. The 4 large subunits of the cytochrome b6-f complex are cytochrome b6, subunit IV (17 kDa polypeptide, petD), cytochrome f and the Rieske protein, while the 4 small subunits are PetG, PetL, PetM and PetN. The complex functions as a dimer. The cofactor is heme.

The protein resides in the plastid. The protein localises to the chloroplast thylakoid membrane. Component of the cytochrome b6-f complex, which mediates electron transfer between photosystem II (PSII) and photosystem I (PSI), cyclic electron flow around PSI, and state transitions. This Rhodomonas salina (Cryptomonas salina) protein is Cytochrome f.